We begin with the raw amino-acid sequence, 92 residues long: Small ribosomal subunit protein uS19c (92 aa).

Belongs to the universal ribosomal protein uS19 family.

It localises to the plastid. The protein resides in the chloroplast. Protein S19 forms a complex with S13 that binds strongly to the 16S ribosomal RNA. The chain is Small ribosomal subunit protein uS19c from Physcomitrium patens (Spreading-leaved earth moss).